Reading from the N-terminus, the 113-residue chain is MEDFQASEETAFVVDEVSSIVKEAIESAIGGNAYQHSKVNQWTTNVLEQTLSQLTKLGRPFKYIVTCVIMQKNGAGLHSASSCFWDSSTDGSCTVRWENKTMYCIVSTFGLSI.

Met-1 is subject to N-acetylmethionine. Positions Gln-41 to Ile-113 are interaction with GNB1.

This sequence belongs to the dynein light chain Tctex-type family. Homodimer. The cytoplasmic dynein 1 complex consists of two catalytic heavy chains (HCs) and a number of non-catalytic subunits presented by intermediate chains (ICs), light intermediate chains (LICs) and light chains (LCs); the composition seems to vary in respect to the IC, LIC and LC composition. The heavy chain homodimer serves as a scaffold for the probable homodimeric assembly of the respective non-catalytic subunits. The ICs and LICs bind directly to the HC dimer and the LCs assemble on the IC dimer. DYNLT1 and DYNLT3 compete for association with dynein IC (DYNC1I1 or DYNC1I2). Self-associates. Interacts with RHO. Interacts with DYNC1I1 and DYNC1I2. Interacts with DOC2A, DOC2B and SCN10A. Interacts with PVR. Interacts with SVIL isoform 2. Interacts with GNB1; the interaction occurs in presence of guanine nucleotide-binding protein G(T) subunit gamma; the interaction diminishes the association of DYNLT1 with dynein IC (DYNC1I1 or DYNC1I2). Interacts with GNB2, GNB3 and GNB5; the interactions occur in presence of guanine nucleotide-binding protein G(T) subunit gamma. Interacts with ACVR2B and ARHGEF2. Interacts with DNAI4. Interacts with CFAP61. In terms of processing, phosphorylated by BMPR2. The phosphorylation status is proposed to regulate the association with the cytoplasmic dynein complex and may have role in cytoplasmic dynein cargo release. In terms of tissue distribution, high level in testis (germ cell-specific). Expressed in sperm (at protein level). 200-fold lower in liver, brain, heart, spleen, and kidney. Levels in thymus and two embryonal carcinoma cell lines were several-fold higher than this low constitutive level.

The protein resides in the golgi apparatus. It localises to the cytoplasm. It is found in the cytoskeleton. The protein localises to the spindle. Its function is as follows. Acts as one of several non-catalytic accessory components of the cytoplasmic dynein 1 complex that are thought to be involved in linking dynein to cargos and to adapter proteins that regulate dynein function. Cytoplasmic dynein 1 acts as a motor for the intracellular retrograde motility of vesicles and organelles along microtubules. Binds to transport cargos and is involved in apical cargo transport such as rhodopsin-bearing vesicles in polarized epithelia. May also be a accessory component of axonemal dynein. Plays an important role in male germ cell development and function. Candidate for involvement in male sterility. Plays a role in neuronal morphogenesis; the function is independent of cytoplasmic dynein and seems to be coupled to regulation of the actin cytoskeleton by enhancing Rac1 activity. The function in neurogenesis may be regulated by association with a G-protein beta-gamma dimer. May function as a receptor-independent activator of heterotrimeric G-protein signaling; the activation appears to be independent of a nucleotide exchange. Plays a role in regulating neurogenesis; inhibits the genesis of neurons from precursor cells during cortical development presumably by antagonizing ARHGEF2. Unrelated to the role in retrograde microtubule-associated movement may play a role in the dimerization of cytoplasmic proteins/domains such as for ACVR2B. Binds to the cytoplasmic domain of ACVR2B and, in vitro, inhibits ACVR2B signaling. Involved in the regulation of mitotic spindle orientation. This is Dynein light chain Tctex-type 1 (Dynlt1) from Mus musculus (Mouse).